A 445-amino-acid chain; its full sequence is Exodeoxyribonuclease 7 large subunit (445 aa).

The protein belongs to the XseA family. As to quaternary structure, heterooligomer composed of large and small subunits.

It localises to the cytoplasm. The enzyme catalyses Exonucleolytic cleavage in either 5'- to 3'- or 3'- to 5'-direction to yield nucleoside 5'-phosphates.. Its function is as follows. Bidirectionally degrades single-stranded DNA into large acid-insoluble oligonucleotides, which are then degraded further into small acid-soluble oligonucleotides. This chain is Exodeoxyribonuclease 7 large subunit, found in Shewanella oneidensis (strain ATCC 700550 / JCM 31522 / CIP 106686 / LMG 19005 / NCIMB 14063 / MR-1).